A 196-amino-acid chain; its full sequence is Thymidylate kinase (196 aa).

Residue 7–14 (GIDGSGKT) coordinates ATP.

Belongs to the thymidylate kinase family.

The enzyme catalyses dTMP + ATP = dTDP + ADP. Phosphorylation of dTMP to form dTDP in both de novo and salvage pathways of dTTP synthesis. The polypeptide is Thymidylate kinase (Wolbachia pipientis wMel).